The following is a 459-amino-acid chain: Glutamate--isopropylamine ligase (459 aa).

The GS beta-grasp domain occupies 19-115 (HNIDTIRLGA…VLCDIQHLNG (97 aa)). A GS catalytic domain is found at 122 to 459 (PRNLLRKAIE…WELARYLDII (338 aa)).

The protein belongs to the glutamine synthetase family.

It catalyses the reaction isopropylamine + L-glutamate + ATP = gamma-L-glutamyl-isopropylamide + ADP + phosphate + H(+). Functionally, involved in the degradation of isopropylamine, which is a constituent of the herbicides atrazine. Catalyzes the ATP-dependent formation of gamma-glutamyl-isopropylamide from isopropylamine and L-glutamate. It can also use aminoalkanes, amino-alcohols (L-alaninol and D-alaninol) and amino-esters as substrates. The chain is Glutamate--isopropylamine ligase (ipuC) from Pseudomonas sp.